We begin with the raw amino-acid sequence, 526 residues long: Cytochrome P450 monooxygenase milC (526 aa).

The chain crosses the membrane as a helical span at residues 2–20 (AIHAAYIFIAATLIALYVA). Cysteine 470 serves as a coordination point for heme.

This sequence belongs to the cytochrome P450 family. Heme serves as cofactor.

It localises to the membrane. It catalyses the reaction cordypyrone A + reduced [NADPH--hemoprotein reductase] + O2 = cordypyrone B + oxidized [NADPH--hemoprotein reductase] + H2O + H(+). Its pathway is secondary metabolite biosynthesis. Cytochrome P450 monooxygenase; part of the gene cluster that mediates the biosynthesis of cordypyrones A and B, 2 pyrones that show modest activities against pathogenic bacteria including methicillin-resistant Staphylococcus aureus (MRSA), Mycobacterium tuberculosis and Bacillus cereus. The HR-PKS milA catalyzes the formation of cordypyrones A via condensation of one acetate with 10 malonate units. Since milA lacks an enoyl reductase domain, the 2 beta-keto processing domains DH and KR of milA collaborate with the trans-enoyl reductase milB to catalyze the different levels of reduction. The cytochrome P450 monooxygenase milC then hydroxylates the C-22 of cordypyrones A to yield cordypyrones B. In Cordyceps militaris (strain CM01) (Caterpillar fungus), this protein is Cytochrome P450 monooxygenase milC.